The sequence spans 344 residues: Phosphoribosylformylglycinamidine cyclo-ligase (344 aa).

This sequence belongs to the AIR synthase family.

The protein resides in the cytoplasm. It carries out the reaction 2-formamido-N(1)-(5-O-phospho-beta-D-ribosyl)acetamidine + ATP = 5-amino-1-(5-phospho-beta-D-ribosyl)imidazole + ADP + phosphate + H(+). It functions in the pathway purine metabolism; IMP biosynthesis via de novo pathway; 5-amino-1-(5-phospho-D-ribosyl)imidazole from N(2)-formyl-N(1)-(5-phospho-D-ribosyl)glycinamide: step 2/2. The chain is Phosphoribosylformylglycinamidine cyclo-ligase from Leptospira interrogans serogroup Icterohaemorrhagiae serovar Lai (strain 56601).